We begin with the raw amino-acid sequence, 161 residues long: Endoribonuclease YbeY (161 aa).

Residues His127, His131, and His137 each coordinate Zn(2+).

This sequence belongs to the endoribonuclease YbeY family. Zn(2+) serves as cofactor.

It is found in the cytoplasm. Its function is as follows. Single strand-specific metallo-endoribonuclease involved in late-stage 70S ribosome quality control and in maturation of the 3' terminus of the 16S rRNA. The polypeptide is Endoribonuclease YbeY (Listeria monocytogenes serotype 4b (strain CLIP80459)).